The following is a 1303-amino-acid chain: Endoplasmic reticulum transmembrane helix translocase spfA (1303 aa).

Transmembrane regions (helical) follow at residues 25-45 and 57-77; these read LHAYVWPFLIIWPAFFAVYLS and EWTFVWSGSIITAQSLLWLMT. The A-domain; part 1 stretch occupies residues 158-191; it reads KPPVKVFQQAQGLTSKEEIDRIQHHYGDNTFDIP. 2 helical membrane-spanning segments follow: residues 201–221 and 223–243; these read EHAVAPFFVFQVFCVGLWMLD and YWYYSLFTLFMLVVFESTVVW. The A-domain; part 2 stretch occupies residues 256 to 408; it reads NIKPYDVWVY…LVRTMIYSTE (153 aa). A glycan (N-linked (GlcNAc...) asparagine) is linked at Asn287. The chain crosses the membrane as a helical span at residues 415-435; that stretch reads VEALLFILFLLIFAIAAAWYV. A glycan (N-linked (GlcNAc...) asparagine) is linked at Asn474. The P-domain; part 1 stretch occupies residues 484-513; the sequence is AIFCTEPFRIPFAGRVDVACFDKTGTLTGE. Residue Asp505 is the 4-aspartylphosphate intermediate of the active site. Residues Asp505 and Thr507 each contribute to the Mg(2+) site. 505–507 is a binding site for ATP; it reads DKT. The tract at residues 515–721 is N-domain; the sequence is LVVDGIAGLT…FAGFLVLQCP (207 aa). Residue Asn589 is glycosylated (N-linked (GlcNAc...) asparagine). The ATP site is built by Phe616 and Arg678. Residues 724–883 are P-domain; part 2; it reads EDAIKAVRML…HVGVALLNGS (160 aa). Asn734 carries an N-linked (GlcNAc...) asparagine glycan. ATP contacts are provided by residues Asp746 and 862 to 866; that span reads DGTND. Position 862 (Asp862) interacts with Mg(2+). The segment at 884–1019 is arm-like; it reads PEDLAKIAEH…ELDDSEPPTI (136 aa). N-linked (GlcNAc...) asparagine glycosylation is present at Asn958. Residues 1020–1035 are P-domain; part 3; it reads KLGDASVAAPFTSKLA. 5 helical membrane-spanning segments follow: residues 1060 to 1080, 1082 to 1102, 1122 to 1142, 1201 to 1221, and 1239 to 1259; these read ILALNCLISAYSLSVIYLDGI, FGDGQVTISGMLMSVCFLSIS, VYIIGSVLGQFAIHIATLIYL, AMYWGLVAASGVAFSCATEFI, and VTLTVLMIIDYAGCWIIENVL. The segment at 1277-1303 is disordered; it reads DQLQREMERKKQEELETQAEKERQRKV.

Belongs to the cation transport ATPase (P-type) (TC 3.A.3) family. Type V subfamily. Requires Mg(2+) as cofactor.

The protein resides in the endoplasmic reticulum membrane. It carries out the reaction [protein]-with a C-terminal TM segment(out) + ATP + H2O = [protein]-with a C-terminal TM segment(in) + ADP + phosphate + H(+). With respect to regulation, the ATPase activity is stimulated by phosphatidylinositol 4-phosphate (PI4P). In terms of biological role, endoplasmic reticulum (ER) translocase required to remove mitochondrial transmembrane proteins mistargeted to the endoplasmic reticulum. Acts as a dislocase that mediates the ATP-dependent extraction of mislocalized mitochondrial transmembrane proteins from the endoplasmic reticulum membrane. Works in concert with the ER Ca(2+) pump srcA to support ER homeostasis. With srcA, also supports redox homeostasis and virulence. This chain is Endoplasmic reticulum transmembrane helix translocase spfA, found in Aspergillus fumigatus (strain ATCC MYA-4609 / CBS 101355 / FGSC A1100 / Af293) (Neosartorya fumigata).